Here is a 967-residue protein sequence, read N- to C-terminus: Siderophore exporter MmpL4 (967 aa).

The next 11 membrane-spanning stretches (helical) occupy residues Ala26–Val46, Val210–Ile230, Val242–Leu262, Ala303–Ala323, Ile333–Val353, Trp384–Pro404, Trp769–Ile789, Phe793–Leu813, Ile821–Val841, Val875–Leu895, and Thr913–Trp934. Residues Ala943 to Gly967 form a disordered region.

It belongs to the resistance-nodulation-cell division (RND) (TC 2.A.6) family. MmpL subfamily. Interacts with MmpS4.

It localises to the cell inner membrane. Functionally, part of an export system, which is required for biosynthesis and secretion of siderophores. This Mycobacterium tuberculosis (strain CDC 1551 / Oshkosh) protein is Siderophore exporter MmpL4 (mmpL4).